A 147-amino-acid polypeptide reads, in one-letter code: Prefoldin subunit alpha 2 (147 aa).

It belongs to the prefoldin subunit alpha family. As to quaternary structure, heterohexamer of two alpha and four beta subunits.

It is found in the cytoplasm. Its function is as follows. Molecular chaperone capable of stabilizing a range of proteins. Seems to fulfill an ATP-independent, HSP70-like function in archaeal de novo protein folding. In Methanocaldococcus jannaschii (strain ATCC 43067 / DSM 2661 / JAL-1 / JCM 10045 / NBRC 100440) (Methanococcus jannaschii), this protein is Prefoldin subunit alpha 2 (pfdA2).